Reading from the N-terminus, the 194-residue chain is dCTP deaminase, dUMP-forming (194 aa).

DCTP is bound by residues 104-109 (RSSLGR), aspartate 122, 130-132 (TLE), glutamine 151, tyrosine 165, lysine 172, and glutamine 176. Residue glutamate 132 is the Proton donor/acceptor of the active site.

It belongs to the dCTP deaminase family. As to quaternary structure, homotrimer.

The catalysed reaction is dCTP + 2 H2O = dUMP + NH4(+) + diphosphate. It functions in the pathway pyrimidine metabolism; dUMP biosynthesis; dUMP from dCTP: step 1/1. Its function is as follows. Bifunctional enzyme that catalyzes both the deamination of dCTP to dUTP and the hydrolysis of dUTP to dUMP without releasing the toxic dUTP intermediate. This is dCTP deaminase, dUMP-forming from Dictyoglomus thermophilum (strain ATCC 35947 / DSM 3960 / H-6-12).